The chain runs to 86 residues: Precursor of CEP4 (86 aa).

A signal peptide spans 1–30 (MVSRGCSITVLFRFLIVLLVIQVHFENTKA). Residues 31–64 (ARHAPVVSWSPPEPPKDDFVWYHKINRFKNIEQD) constitute a propeptide that is removed on maturation. The interval 63–86 (QDAFRPTHQGPSQGIGHKNPPGAP) is disordered. P68 and P73 each carry hydroxyproline. Residues 80–86 (KNPPGAP) constitute a propeptide that is removed on maturation.

Belongs to the C-terminally encoded plant signaling peptide (CEP) family. As to quaternary structure, interacts with CEP receptors (e.g. CEPR1 and CEPR2). Post-translationally, the mature small signaling peptide is generated by proteolytic processing of the longer precursor. Expressed at low levels in flowers. Present in lateral roots, shoot apical meristem (SAM), flowers and siliques.

It localises to the secreted. The protein localises to the extracellular space. Its subcellular location is the apoplast. In terms of biological role, extracellular signaling peptide that represses primary root growth rate. Promotes shoot growth and modulates leaf morphology. Regulates systemic nitrogen (N)-demand signaling. Mediates up-regulation of genes involved in N uptake and assimilation pathways. In Arabidopsis thaliana (Mouse-ear cress), this protein is Precursor of CEP4.